We begin with the raw amino-acid sequence, 182 residues long: Isopentenyl-diphosphate Delta-isomerase (182 aa).

2 residues coordinate Mn(2+): H25 and H32. A Nudix hydrolase domain is found at 30 to 164 (LLHLAFSSWL…PWAFSPWMVM (135 aa)). C67 is an active-site residue. H69 provides a ligand contact to Mn(2+). Mg(2+) is bound at residue E87. 2 residues coordinate Mn(2+): E114 and E116. E116 is an active-site residue.

It belongs to the IPP isomerase type 1 family. In terms of assembly, homodimer. Mg(2+) is required as a cofactor. The cofactor is Mn(2+).

Its subcellular location is the cytoplasm. The enzyme catalyses isopentenyl diphosphate = dimethylallyl diphosphate. It functions in the pathway isoprenoid biosynthesis; dimethylallyl diphosphate biosynthesis; dimethylallyl diphosphate from isopentenyl diphosphate: step 1/1. In terms of biological role, catalyzes the 1,3-allylic rearrangement of the homoallylic substrate isopentenyl (IPP) to its highly electrophilic allylic isomer, dimethylallyl diphosphate (DMAPP). The chain is Isopentenyl-diphosphate Delta-isomerase from Escherichia coli O127:H6 (strain E2348/69 / EPEC).